The chain runs to 178 residues: GPI mannosyltransferase 2 subunit C167.09 (178 aa).

The signal sequence occupies residues 1–20 (MREFRLIFVLLFFLPSFAIA). The Lumenal portion of the chain corresponds to 21–152 (NTEIINVETG…LGFLPKSVLP (132 aa)). Residues N48, N49, N106, N115, and N122 are each glycosylated (N-linked (GlcNAc...) asparagine). A helical membrane pass occupies residues 153–173 (IVGFVFVIILIALICMTNLFI). At 174–178 (KHKRD) the chain is on the cytoplasmic side.

Part of the GPI mannosyltransferase 2 complex composed of gpi18 and C167.09.

It localises to the endoplasmic reticulum membrane. Its pathway is glycolipid biosynthesis; glycosylphosphatidylinositol-anchor biosynthesis. Essential component of the GPI mannosyltransferase 2 complex. Responsible for the transfer of the second mannose to the glycosylphosphatidylinositol during GPI precursor assembly. In Schizosaccharomyces pombe (strain 972 / ATCC 24843) (Fission yeast), this protein is GPI mannosyltransferase 2 subunit C167.09.